Reading from the N-terminus, the 68-residue chain is Figainin 1 (68 aa).

The signal sequence occupies residues 1-22 (MAFLKKSLFLVLFLGLVSLSIG). Residues 23-45 (EEEKREEEEKNEEGANQEENAEN) are disordered. Residues 23–47 (EEEKREEEEKNEEGANQEENAENKE) constitute a propeptide that is removed on maturation. A compositionally biased stretch (acidic residues) spans 26–42 (KREEEEKNEEGANQEEN). The residue at position 67 (lysine 67) is a Lysine amide.

In terms of tissue distribution, expressed by the skin glands.

The protein localises to the secreted. Functionally, antimicrobial peptide that displays antibacterial and antiprotozoal activity. Exhibits antibacterial activity against the Gram-positive bacteria S.epidermidis ATCC 12228 (MIC=2 uM), E.casseliflavus ATCC 700327 (MIC=16 uM), S.aureus ATCC 25923 (MIC=4 uM) and E.faecalis ATCC 29212 (MIC=8 uM), and the Gram-negative bacteria E.coli ATCC 25922 (MIC=16 uM) and K.pneumoniae ATCC 13883 (MIC=4 uM). Displays antiprotozoal activity against the epimastigote form of T.cruzi (IC(50)=15.9 uM). Does not show antimicrobial activity against the Gram-negative bacterium P.aeruginosa ATCC 27853, or the fungi C.albicans ATCC 90028 and C.parapsilosis ATCC 22019. Shows high cytolytic activity against human erythrocytes (HC(50)=10 uM), and displays anti-proliferative effects against various cancer cell lines including MCF-7 breast cancer cells (IC(50)=13.7 uM), HeLa cervical adenocarcinoma cells (IC(50)=11.1 uM) and B16F10 murine melanoma cells (IC(50)=10.5 uM). The polypeptide is Figainin 1 (Boana raniceps (Chaco tree frog)).